The chain runs to 231 residues: Large ribosomal subunit protein uL1 (231 aa).

This sequence belongs to the universal ribosomal protein uL1 family. In terms of assembly, part of the 50S ribosomal subunit.

Its function is as follows. Binds directly to 23S rRNA. The L1 stalk is quite mobile in the ribosome, and is involved in E site tRNA release. Protein L1 is also a translational repressor protein, it controls the translation of the L11 operon by binding to its mRNA. The chain is Large ribosomal subunit protein uL1 from Ralstonia nicotianae (strain ATCC BAA-1114 / GMI1000) (Ralstonia solanacearum).